Here is a 1247-residue protein sequence, read N- to C-terminus: Respiratory nitrate reductase 1 alpha chain (1247 aa).

A 4Fe-4S Mo/W bis-MGD-type domain is found at 43–107 (DKIVRSTHGV…SYSWYLYSAN (65 aa)). 4 residues coordinate [4Fe-4S] cluster: His50, Cys54, Cys58, and Cys93. Residue Asp223 participates in Mo-bis(molybdopterin guanine dinucleotide) binding.

Belongs to the prokaryotic molybdopterin-containing oxidoreductase family. Dimer of heterotrimers each composed of an alpha, a beta and a gamma chain. Alpha and beta are catalytic chains; gamma chains are involved in binding the enzyme complex to the cytoplasmic membrane. Interacts with the NarJ chaperone. Requires [4Fe-4S] cluster as cofactor. Mo-bis(molybdopterin guanine dinucleotide) is required as a cofactor.

The protein resides in the cell membrane. It carries out the reaction nitrate + a quinol = a quinone + nitrite + H2O. Its function is as follows. The nitrate reductase enzyme complex allows E.coli to use nitrate as an electron acceptor during anaerobic growth. The alpha chain is the actual site of nitrate reduction. In Escherichia coli (strain K12), this protein is Respiratory nitrate reductase 1 alpha chain (narG).